The chain runs to 169 residues: Myosin regulatory light chain 2, skeletal muscle isoform A (169 aa).

Phosphoserine is present on serine 21. EF-hand domains follow at residues 26-61 (SQIQEYKEAFTIIDQNRDGIISKDDLRDVLASMGQL), 96-131 (DPEDVIVSAFKVLDPEGTGSIKKEFLEELLTTQCDR), and 132-167 (FTAEEMKNLWAAFPPDVAGNVDYKNICYVITHGEEK). Ca(2+) contacts are provided by aspartate 39, asparagine 41, aspartate 43, and aspartate 50.

Myosin is a hexamer of 2 heavy chains and 4 light chains. Interacts with nanos3; the interaction negatively regulates mylpfa phosphorylation.

Myosin regulatory subunit that plays a role to maintain muscle integrity during early development. Plays a role in muscle contraction. This chain is Myosin regulatory light chain 2, skeletal muscle isoform A (mylpfa), found in Danio rerio (Zebrafish).